We begin with the raw amino-acid sequence, 308 residues long: Elongation factor Ts (308 aa).

The segment at T79 to V82 is involved in Mg(2+) ion dislocation from EF-Tu.

The protein belongs to the EF-Ts family.

The protein resides in the cytoplasm. Associates with the EF-Tu.GDP complex and induces the exchange of GDP to GTP. It remains bound to the aminoacyl-tRNA.EF-Tu.GTP complex up to the GTP hydrolysis stage on the ribosome. This chain is Elongation factor Ts, found in Bdellovibrio bacteriovorus (strain ATCC 15356 / DSM 50701 / NCIMB 9529 / HD100).